The chain runs to 409 residues: Elongation factor Tu (409 aa).

Residues 10–214 (KPHANIGTIG…EVDAYIPTPE (205 aa)) form the tr-type G domain. Residues 19 to 26 (GHVDHGKT) form a G1 region. Residue 19-26 (GHVDHGKT) participates in GTP binding. Residue Thr26 participates in Mg(2+) binding. Residues 60–64 (GITIN) form a G2 region. Residues 81–84 (DCPG) form a G3 region. GTP-binding positions include 81 to 85 (DCPGH) and 136 to 139 (NKED). A G4 region spans residues 136-139 (NKED). Positions 174–176 (SAL) are G5.

The protein belongs to the TRAFAC class translation factor GTPase superfamily. Classic translation factor GTPase family. EF-Tu/EF-1A subfamily. Monomer.

It localises to the cytoplasm. It carries out the reaction GTP + H2O = GDP + phosphate + H(+). Its function is as follows. GTP hydrolase that promotes the GTP-dependent binding of aminoacyl-tRNA to the A-site of ribosomes during protein biosynthesis. The polypeptide is Elongation factor Tu (Synechococcus elongatus (strain ATCC 33912 / PCC 7942 / FACHB-805) (Anacystis nidulans R2)).